A 131-amino-acid polypeptide reads, in one-letter code: Major pollen allergen Pla l 1 (131 aa).

Intrachain disulfides connect cysteine 17–cysteine 86, cysteine 20–cysteine 131, and cysteine 42–cysteine 74. Zn(2+)-binding residues include histidine 21, aspartate 45, aspartate 73, and glutamate 88. Residue asparagine 107 is glycosylated (N-linked (GlcNAc...) asparagine).

This sequence belongs to the Ole e I family. Exists in two variants: glycosylated and non-glycosylated. Carries a complex, major N-linked glycan, with a alpha-1,3-fucose residue in its structure and probably also a beta-1,2-xylose. The average modification of molecular mass due to glycosylation is approximately 969 Da.

Its subcellular location is the secreted. The sequence is that of Major pollen allergen Pla l 1 from Plantago lanceolata (English plantain).